The chain runs to 135 residues: ATP synthase epsilon chain (135 aa).

It belongs to the ATPase epsilon chain family. As to quaternary structure, F-type ATPases have 2 components, CF(1) - the catalytic core - and CF(0) - the membrane proton channel. CF(1) has five subunits: alpha(3), beta(3), gamma(1), delta(1), epsilon(1). CF(0) has three main subunits: a, b and c.

The protein resides in the cell inner membrane. Its function is as follows. Produces ATP from ADP in the presence of a proton gradient across the membrane. In Bradyrhizobium sp. (strain BTAi1 / ATCC BAA-1182), this protein is ATP synthase epsilon chain.